We begin with the raw amino-acid sequence, 103 residues long: GIDPNYRTSKPVVGDHSGHKIYGPVESPKVLGVHGTIVGVDFDLCIADGSCITACPVNVFQWYETPGHPASEKKADPVNEQACIFCMACVNVCPVAAIDVKPP.

Positions 1–36 (GIDPNYRTSKPVVGDHSGHKIYGPVESPKVLGVHGT) are N-terminal extension. Histidine 19 contributes to the Zn(2+) binding site. Lysine 29 carries the post-translational modification N6-methyllysine. Histidine 34 serves as a coordination point for Zn(2+). 4Fe-4S ferredoxin-type domains lie at 35–65 (GTIVGVDFDLCIADGSCITACPVNVFQWYET) and 74–103 (KADPVNEQACIFCMACVNVCPVAAIDVKPP). Cysteine 45 and cysteine 51 together coordinate [3Fe-4S] cluster. [4Fe-4S] cluster is bound at residue cysteine 55. Position 76 (aspartate 76) interacts with Zn(2+). [4Fe-4S] cluster-binding residues include cysteine 83, cysteine 86, and cysteine 89. Cysteine 93 provides a ligand contact to [3Fe-4S] cluster.

It depends on [3Fe-4S] cluster as a cofactor. [4Fe-4S] cluster is required as a cofactor. Zn(2+) serves as cofactor.

Ferredoxins are iron-sulfur proteins that transfer electrons in a wide variety of metabolic reactions. In Sulfolobus acidocaldarius (strain ATCC 33909 / DSM 639 / JCM 8929 / NBRC 15157 / NCIMB 11770), this protein is Zinc-containing ferredoxin (zfx).